A 139-amino-acid polypeptide reads, in one-letter code: Large ribosomal subunit protein mL42 (139 aa).

The transit peptide at 1 to 32 (MAVAAVKWVMSKRTILKHLFPVQNGALYCVCH) directs the protein to the mitochondrion.

This sequence belongs to the mitochondrion-specific ribosomal protein mL42 family. Component of the mitochondrial ribosome large subunit (39S) which comprises a 16S rRNA and about 50 distinct proteins. Component of the mitochondrial ribosome small subunit (28S) which comprises a 12S rRNA and about 30 distinct proteins.

It localises to the mitochondrion. This is Large ribosomal subunit protein mL42 (MRPL42) from Pongo abelii (Sumatran orangutan).